The following is a 419-amino-acid chain: Synaptosomal-associated protein 47 (419 aa).

T-SNARE coiled-coil homology domains follow at residues 108 to 170 (PQGA…LSEL) and 356 to 418 (VLQP…MRKL).

It belongs to the SVAP1 family.

May play a role in intracellular membrane fusion. In Danio rerio (Zebrafish), this protein is Synaptosomal-associated protein 47 (snap47).